Here is a 452-residue protein sequence, read N- to C-terminus: Transcription factor ETV6 (452 aa).

At K11 the chain carries N6-acetyllysine; alternate. A Glycyl lysine isopeptide (Lys-Gly) (interchain with G-Cter in SUMO2); alternate cross-link involves residue K11. Residue T18 is modified to Phosphothreonine. A Phosphoserine modification is found at S22. One can recognise a PNT domain in the interval A40–R124. Residues E154–G262 form a disordered region. The segment covering V158–P174 has biased composition (polar residues). 3 positions are modified to phosphoserine: S213, S238, and S257. K288 is covalently cross-linked (Glycyl lysine isopeptide (Lys-Gly) (interchain with G-Cter in SUMO2)). K302 carries the N6-acetyllysine; alternate modification. K302 participates in a covalent cross-link: Glycyl lysine isopeptide (Lys-Gly) (interchain with G-Cter in SUMO2); alternate. S323 bears the Phosphoserine mark. The ETS DNA-binding region spans R339–M420. Glycyl lysine isopeptide (Lys-Gly) (interchain with G-Cter in SUMO2) cross-links involve residues K403 and K421.

Belongs to the ETS family. As to quaternary structure, can form homodimers or heterodimers with TEL2 or FLI1. Interacts with L3MBTL1 and HDAC9.

It localises to the nucleus. Functionally, transcriptional repressor; binds to the DNA sequence 5'-CCGGAAGT-3'. Plays a role in hematopoiesis and malignant transformation. This Bos taurus (Bovine) protein is Transcription factor ETV6 (ETV6).